A 339-amino-acid polypeptide reads, in one-letter code: Acyl-CoA dehydrogenase FadE28 (339 aa).

FAD is bound by residues arginine 227, glutamine 238, histidine 295, and glycine 299.

Belongs to the acyl-CoA dehydrogenase family. As to quaternary structure, heterotetramer composed of FadE28 and FadE29. The cofactor is FAD.

It catalyses the reaction 3-oxochol-4-en-22-oyl-CoA + A = 3-oxochola-4,17-dien-22-oyl-CoA + AH2. It participates in steroid metabolism; cholesterol degradation. Functionally, involved in the third cycle of side chain dehydrogenation in the beta-oxidation of cholesterol catabolism. May play an important role for the initial macrophage invasion, possibly in response to the acidification of phagosome. It contributes partly to the virulence by increasing the efficiency of beta-oxidation. Catalyzes the dehydrogenation of 2'-propanoyl-CoA ester side chains of 3-oxo-4-pregnene-20-carboxyl-CoA (3-OPC-CoA) to yield 3-oxo-4,17-pregnadiene-20-carboxyl-CoA (3-OPDC-CoA). Also able to dehydrogenate steroyl-CoA such as 3-oxo-chol-4-en-24-oyl-CoA (3-OCO-CoA), 1beta-(2'-propanoyl-CoA)-3a-alpha-H-7a-beta-methylhexahydro-4-indanone (indanone-CoA ester), hexahydroindanone and pregenenone. This Mycobacterium tuberculosis (strain ATCC 25618 / H37Rv) protein is Acyl-CoA dehydrogenase FadE28 (fadE28).